A 104-amino-acid chain; its full sequence is L-rhamnose mutarotase (104 aa).

Y18 contributes to the substrate binding site. H22 serves as the catalytic Proton donor. Substrate-binding positions include Y41 and 76 to 77 (WW).

It belongs to the rhamnose mutarotase family. In terms of assembly, homodimer.

It is found in the cytoplasm. It catalyses the reaction alpha-L-rhamnose = beta-L-rhamnose. The protein operates within carbohydrate metabolism; L-rhamnose metabolism. Involved in the anomeric conversion of L-rhamnose. This chain is L-rhamnose mutarotase, found in Escherichia coli O17:K52:H18 (strain UMN026 / ExPEC).